The following is a 215-amino-acid chain: Probable GTP-binding protein EngB (215 aa).

The 175-residue stretch at 30–204 folds into the EngB-type G domain; the sequence is EGLEVAFAGR…QMVLAQWLGL (175 aa). GTP-binding positions include 38–45, 64–68, 82–85, 149–152, and 182–185; these read GRSNAGKS, GRTQL, DLPG, TKAD, and LFSA. Mg(2+) is bound by residues S45 and T66.

It belongs to the TRAFAC class TrmE-Era-EngA-EngB-Septin-like GTPase superfamily. EngB GTPase family. Requires Mg(2+) as cofactor.

Functionally, necessary for normal cell division and for the maintenance of normal septation. This Pseudomonas aeruginosa (strain ATCC 15692 / DSM 22644 / CIP 104116 / JCM 14847 / LMG 12228 / 1C / PRS 101 / PAO1) protein is Probable GTP-binding protein EngB.